Here is a 415-residue protein sequence, read N- to C-terminus: Gamma-glutamyl phosphate reductase (415 aa).

It belongs to the gamma-glutamyl phosphate reductase family.

It localises to the cytoplasm. It catalyses the reaction L-glutamate 5-semialdehyde + phosphate + NADP(+) = L-glutamyl 5-phosphate + NADPH + H(+). It functions in the pathway amino-acid biosynthesis; L-proline biosynthesis; L-glutamate 5-semialdehyde from L-glutamate: step 2/2. Catalyzes the NADPH-dependent reduction of L-glutamate 5-phosphate into L-glutamate 5-semialdehyde and phosphate. The product spontaneously undergoes cyclization to form 1-pyrroline-5-carboxylate. In Xylella fastidiosa (strain 9a5c), this protein is Gamma-glutamyl phosphate reductase.